A 143-amino-acid chain; its full sequence is 3-dehydroquinate dehydratase (143 aa).

Y22 serves as the catalytic Proton acceptor. The substrate site is built by N73, H79, and D86. The active-site Proton donor is H99. Residues 100 to 101 and R110 contribute to the substrate site; that span reads LS.

This sequence belongs to the type-II 3-dehydroquinase family. Homododecamer.

It catalyses the reaction 3-dehydroquinate = 3-dehydroshikimate + H2O. It functions in the pathway metabolic intermediate biosynthesis; chorismate biosynthesis; chorismate from D-erythrose 4-phosphate and phosphoenolpyruvate: step 3/7. Its function is as follows. Catalyzes a trans-dehydration via an enolate intermediate. The polypeptide is 3-dehydroquinate dehydratase (Salinispora tropica (strain ATCC BAA-916 / DSM 44818 / JCM 13857 / NBRC 105044 / CNB-440)).